The primary structure comprises 148 residues: Urease accessory protein UreE (148 aa).

It belongs to the UreE family.

It localises to the cytoplasm. Involved in urease metallocenter assembly. Binds nickel. Probably functions as a nickel donor during metallocenter assembly. This Lysinibacillus sphaericus (strain C3-41) protein is Urease accessory protein UreE.